A 258-amino-acid polypeptide reads, in one-letter code: Synapse differentiation-inducing gene protein 1 (258 aa).

The Cytoplasmic segment spans residues 1-181 (MDGIIEQKSM…NFLMMPPRDH (181 aa)). A Phosphoserine modification is found at Ser-137. A helical transmembrane segment spans residues 182-202 (LGLSVFSMLCCFWPLGIAAFY). At 203 to 228 (LSHETNKAVAKGDLHQASTSSRRALF) the chain is on the extracellular side. An intramembrane region (helical) is located at residues 229–249 (LAVLSITIGTGVYVGVAVALI). Over 250-258 (AYLSKNNHL) the chain is Extracellular.

It belongs to the CD225/Dispanin family. In terms of assembly, homodimer. Interacts with GRIA1 and GRIA2.

It localises to the cell membrane. The protein resides in the early endosome membrane. Its subcellular location is the postsynaptic density membrane. The protein localises to the synapse. It is found in the cell projection. It localises to the dendrite. The protein resides in the dendritic spine. Functionally, may regulate AMPA receptor content at nascent synapses, and have a role in postsynaptic development and maturation. The chain is Synapse differentiation-inducing gene protein 1 (SYNDIG1) from Macaca fascicularis (Crab-eating macaque).